A 344-amino-acid chain; its full sequence is Phenylalanine--tRNA ligase alpha subunit (344 aa).

Glu-269 lines the Mg(2+) pocket.

Belongs to the class-II aminoacyl-tRNA synthetase family. Phe-tRNA synthetase alpha subunit type 1 subfamily. In terms of assembly, tetramer of two alpha and two beta subunits. The cofactor is Mg(2+).

The protein resides in the cytoplasm. The catalysed reaction is tRNA(Phe) + L-phenylalanine + ATP = L-phenylalanyl-tRNA(Phe) + AMP + diphosphate + H(+). In Ralstonia nicotianae (strain ATCC BAA-1114 / GMI1000) (Ralstonia solanacearum), this protein is Phenylalanine--tRNA ligase alpha subunit.